Consider the following 256-residue polypeptide: Thiazole synthase (256 aa).

K95 acts as the Schiff-base intermediate with DXP in catalysis. Residues G156, 182–183 (AG), and 204–205 (NT) contribute to the 1-deoxy-D-xylulose 5-phosphate site.

This sequence belongs to the ThiG family. In terms of assembly, homotetramer. Forms heterodimers with either ThiH or ThiS.

Its subcellular location is the cytoplasm. The enzyme catalyses [ThiS sulfur-carrier protein]-C-terminal-Gly-aminoethanethioate + 2-iminoacetate + 1-deoxy-D-xylulose 5-phosphate = [ThiS sulfur-carrier protein]-C-terminal Gly-Gly + 2-[(2R,5Z)-2-carboxy-4-methylthiazol-5(2H)-ylidene]ethyl phosphate + 2 H2O + H(+). It participates in cofactor biosynthesis; thiamine diphosphate biosynthesis. Catalyzes the rearrangement of 1-deoxy-D-xylulose 5-phosphate (DXP) to produce the thiazole phosphate moiety of thiamine. Sulfur is provided by the thiocarboxylate moiety of the carrier protein ThiS. In vitro, sulfur can be provided by H(2)S. This is Thiazole synthase from Escherichia coli O127:H6 (strain E2348/69 / EPEC).